The sequence spans 85 residues: Probable oxaloacetate decarboxylase gamma chain (85 aa).

A helical transmembrane segment spans residues 11–33 (AAALMVTGMGVVFIFLTILIFLV).

This sequence belongs to the OadG family. As to quaternary structure, heterotrimer of an alpha, a beta and a gamma subunit. It depends on Na(+) as a cofactor.

The protein resides in the cell membrane. The enzyme catalyses oxaloacetate + 2 Na(+)(in) + H(+) = pyruvate + 2 Na(+)(out) + CO2. Catalyzes the decarboxylation of oxaloacetate coupled to Na(+) translocation. The chain is Probable oxaloacetate decarboxylase gamma chain from Vibrio vulnificus (strain CMCP6).